We begin with the raw amino-acid sequence, 256 residues long: Probable ribosomal RNA small subunit methyltransferase A (256 aa).

Residues His-8, Leu-10, Gly-34, Glu-55, Asp-83, and Asn-98 each contribute to the S-adenosyl-L-methionine site.

It belongs to the class I-like SAM-binding methyltransferase superfamily. rRNA adenine N(6)-methyltransferase family. RsmA subfamily.

It is found in the cytoplasm. Specifically dimethylates two adjacent adenosines in the loop of a conserved hairpin near the 3'-end of 16S rRNA in the 30S particle. May play a critical role in biogenesis of 30S subunits. The sequence is that of Probable ribosomal RNA small subunit methyltransferase A from Methanospirillum hungatei JF-1 (strain ATCC 27890 / DSM 864 / NBRC 100397 / JF-1).